A 236-amino-acid chain; its full sequence is Probable metal transport system ATP-binding protein TC_0697 (236 aa).

Residues 5-236 form the ABC transporter domain; it reads LILENVSFRY…FCCNTFGKCS (232 aa). 39–46 is an ATP binding site; that stretch reads GPNGGGKT.

The protein belongs to the ABC transporter superfamily.

The protein localises to the cell inner membrane. Part of an ATP-driven transport system TC_0696/TC_0697/TC_0698 for a metal. Probably responsible for energy coupling to the transport system. This chain is Probable metal transport system ATP-binding protein TC_0697, found in Chlamydia muridarum (strain MoPn / Nigg).